The primary structure comprises 119 residues: Amicyanin-alpha (119 aa).

Positions 1–20 are cleaved as a signal peptide; that stretch reads MRALAFAAALAAFSATAALA. The Plastocyanin-like domain occupies 21–119; the sequence is AGALEAVQEA…PFMKGKVVVE (99 aa). Histidine 67, cysteine 106, histidine 109, and methionine 112 together coordinate Cu cation.

Cu cation serves as cofactor.

Its subcellular location is the periplasm. The protein operates within one-carbon metabolism; methylamine degradation. Primary acceptor of electrons from methylamine dehydrogenase. Passes those electrons on either a soluble cytochrome c or to pseudoazurin. The polypeptide is Amicyanin-alpha (mauC) (Methylorubrum extorquens (strain ATCC 14718 / DSM 1338 / JCM 2805 / NCIMB 9133 / AM1) (Methylobacterium extorquens)).